The primary structure comprises 461 residues: Lysosomal proton-coupled steroid conjugate and bile acid symporter SLC46A3 (461 aa).

The signal sequence occupies residues 1 to 25; that stretch reads MKISFIEPAILLYAFAMTLTIPLTA. Residues 26-70 lie on the Extracellular side of the membrane; the sequence is QYVYRRIWEETGNYTFTSSSNVSECEQNKSSSTFAFQEEVQKKAS. N-linked (GlcNAc...) asparagine glycosylation is found at Asn38, Asn46, and Asn53. The chain crosses the membrane as a helical span at residues 71-91; the sequence is LFSLQVEISGLIPGLVSTFML. At 92–103 the chain is on the cytoplasmic side; the sequence is LSSSDNHGRKLP. A helical membrane pass occupies residues 104 to 124; the sequence is MVLSSLGSLGTNLWLCAMSYF. The Extracellular portion of the chain corresponds to 125–135; that stretch reads DLPLQLLVAST. Residues 136-156 form a helical membrane-spanning segment; sequence FIGALFGNYTTFWGACFAYIV. Residues 157–170 lie on the Cytoplasmic side of the membrane; the sequence is DQEKEYKHRIIRIA. The chain crosses the membrane as a helical span at residues 171-191; that stretch reads VLDFMLGVVTGLTGLSSGYFI. Topologically, residues 192-197 are extracellular; sequence RELGFA. The helical transmembrane segment at 198-218 threads the bilayer; that stretch reads WSYFIIAVVVLVNLAYILFFL. Residues 219 to 260 lie on the Cytoplasmic side of the membrane; it reads SDPIKESSSQIVTMSCSESLKDLFYRTYMLFKNGSCKRRSLL. Residues 261–281 form a helical membrane-spanning segment; sequence CLLIFTLVVYFFVVFGITPVF. Residues 282 to 301 lie on the Extracellular side of the membrane; that stretch reads TLYELGPPLCWNEVYIGYGS. Residues 302-322 traverse the membrane as a helical segment; sequence ALGSLSFLSSFLGIWLFSYCL. Residues 323–324 lie on the Cytoplasmic side of the membrane; that stretch reads KD. Residues 325–345 form a helical membrane-spanning segment; sequence IHIAYVGIFTTMVGMMLTAFT. At 346–347 the chain is on the extracellular side; that stretch reads RT. The helical transmembrane segment at 348 to 368 threads the bilayer; that stretch reads TLMMFLVRISFFFTIMPLSIL. Residues 369–381 lie on the Cytoplasmic side of the membrane; the sequence is RSMLSKVVHSTEQ. A helical transmembrane segment spans residues 382 to 402; sequence GVLFACIAFLETLGGVTSTSA. Residues 403 to 415 are Extracellular-facing; sequence YNGIYSATVAWYP. A helical membrane pass occupies residues 416–436; sequence GFVFLLSAGLLVLPAVSLCMV. Over 437-461 the chain is Cytoplasmic; that stretch reads KCIGWEEGSYTLLIHDEPSEHTSDS. Residues 446 to 449 carry the Tyrosine-based lysosomal-sorting motif motif; the sequence is YTLL.

It belongs to the major facilitator superfamily. SLC46A family.

It localises to the lysosome membrane. The enzyme catalyses estrone 3-sulfate(out) + n H(+)(out) = estrone 3-sulfate(in) + n H(+)(in). It catalyses the reaction 25-hydroxyvitamin D3 sulfate(out) + n H(+)(out) = 25-hydroxyvitamin D3 sulfate(in) + n H(+)(in). The catalysed reaction is cholate(out) + n H(+)(out) = cholate(in) + n H(+)(in). It carries out the reaction glycocholate(out) + n H(+)(out) = glycocholate(in) + n H(+)(in). The enzyme catalyses taurocholate(out) + n H(+)(out) = taurocholate(in) + n H(+)(in). It catalyses the reaction dehydroepiandrosterone 3-sulfate(out) + n H(+)(out) = dehydroepiandrosterone 3-sulfate(in) + n H(+)(in). The catalysed reaction is N-acetyl-D-muramoyl-L-alanyl-D-isoglutamine(out) + n H(+)(out) = N-acetyl-D-muramoyl-L-alanyl-D-isoglutamine(in) + n H(+)(in). It carries out the reaction 2',3'-cGAMP(out) + n H(+)(out) = 2',3'-cGAMP(in) + n H(+)(in). Lysosomal proton-coupled steroid conjugate and bile acid transporter. Preferentially recognizes lipophilic steroid conjugates or bile acis as endogenous substrates and seems to mediate escape from lysosomes to the cytoplasm. Modulates hepatic cytosolic copper homeostasis, maybe acting as a lysosomal copper transporter and sequestering copper ions in the lysosome. Delivers pathogen-associated molecular patterns to cytosolic pattern recognition receptors as part of the innate immune response to microbes. Selectively transports bacterial muramyl dipeptide (MDP) into the cytosol for recognition by NOD2, triggering inflammatory responses. Likely acts as a redundant importer of cyclic GMP-AMP dinucleotides (cGAMPs) in monocyte and macrophage cell lineages. The transport mechanism, its electrogenicity and stoichiometry remain to be elucidated. This chain is Lysosomal proton-coupled steroid conjugate and bile acid symporter SLC46A3 (Slc46a3), found in Rattus norvegicus (Rat).